We begin with the raw amino-acid sequence, 277 residues long: MKKTQQKEIENVTNITGVRQIELWRRDDLQHPRLDEVAEEVPVALVYNGISHVVMMASPKDLEYFALGFSLSEGIIESPRDIFGMDVVPSCNGLEVQIELSSRRFMGLKERRRALAGRTGCGVCGVEQLNDIGKPVQPLPFTQMFDLNKLDDALRHLNDFQPVGQLTGCTHAAAWMLPSGELVGGHEDVGRHVALDKLLGRRSQEGESWQQGAVLVSSRASYEMVQKSAMCGVEILFAVSAATTLAVEVAERCNLTLVGFCKPGRATVYTHPQRLSN.

Cysteine 121 acts as the Cysteine persulfide intermediate in catalysis. 260–265 contributes to the Mo-bis(molybdopterin guanine dinucleotide) binding site; that stretch reads FCKPGR.

It belongs to the FdhD family.

The protein localises to the cytoplasm. Required for formate dehydrogenase (FDH) activity. Acts as a sulfur carrier protein that transfers sulfur from IscS to the molybdenum cofactor prior to its insertion into FDH. The sequence is that of Sulfur carrier protein FdhD from Escherichia coli O6:H1 (strain CFT073 / ATCC 700928 / UPEC).